Consider the following 337-residue polypeptide: Ketol-acid reductoisomerase (NADP(+)) (337 aa).

The region spanning 3–183 is the KARI N-terminal Rossmann domain; sequence VEMFYDDDAD…GGTRAGVIKT (181 aa). Residues 26–29, Ser-52, Ser-54, and 84–87 contribute to the NADP(+) site; these read YGSQ and DTAQ. Residue His-109 is part of the active site. Gly-135 is a binding site for NADP(+). Residues 184–329 enclose the KARI C-terminal knotted domain; it reads TFKEETETDL…AKLRGLMSWV (146 aa). Mg(2+) is bound by residues Asp-192, Glu-196, Glu-228, and Glu-232. Ser-253 is a binding site for substrate.

The protein belongs to the ketol-acid reductoisomerase family. Mg(2+) is required as a cofactor.

The enzyme catalyses (2R)-2,3-dihydroxy-3-methylbutanoate + NADP(+) = (2S)-2-acetolactate + NADPH + H(+). It carries out the reaction (2R,3R)-2,3-dihydroxy-3-methylpentanoate + NADP(+) = (S)-2-ethyl-2-hydroxy-3-oxobutanoate + NADPH + H(+). Its pathway is amino-acid biosynthesis; L-isoleucine biosynthesis; L-isoleucine from 2-oxobutanoate: step 2/4. It participates in amino-acid biosynthesis; L-valine biosynthesis; L-valine from pyruvate: step 2/4. Functionally, involved in the biosynthesis of branched-chain amino acids (BCAA). Catalyzes an alkyl-migration followed by a ketol-acid reduction of (S)-2-acetolactate (S2AL) to yield (R)-2,3-dihydroxy-isovalerate. In the isomerase reaction, S2AL is rearranged via a Mg-dependent methyl migration to produce 3-hydroxy-3-methyl-2-ketobutyrate (HMKB). In the reductase reaction, this 2-ketoacid undergoes a metal-dependent reduction by NADPH to yield (R)-2,3-dihydroxy-isovalerate. The polypeptide is Ketol-acid reductoisomerase (NADP(+)) (Nocardia farcinica (strain IFM 10152)).